The chain runs to 172 residues: Caltractin (172 aa).

Residues 1-23 (MQKYGSKKIGATSATSSNKQKVQ) form a disordered region. A compositionally biased stretch (polar residues) spans 12–21 (TSATSSNKQK). EF-hand domains are found at residues 29-64 (EQRQEIKEAFDLFDMDGSGKIDAKELKVAMRALGFE), 65-99 (PKKEEIKKMISGIDNGSGKIDFNDFLQLMTAKMSE), 101-136 (DSHAEIMKAFRLFDEDDSGFITFANLKRVAKDLGEN), and 137-172 (MTDEELREMIEEADRSNQGQISKEDFLRIMKKTNLF). Ca(2+) contacts are provided by D42, D44, S46, K48, and E53.

This sequence belongs to the centrin family. Monomer.

The protein resides in the cytoplasm. The protein localises to the cytoskeleton. It is found in the microtubule organizing center. It localises to the centrosome. Functionally, plays a fundamental role in microtubule-organizing center structure and function. The sequence is that of Caltractin (CTN) from Naegleria gruberi (Amoeba).